A 103-amino-acid polypeptide reads, in one-letter code: Large ribosomal subunit protein uL24 (103 aa).

It belongs to the universal ribosomal protein uL24 family. In terms of assembly, part of the 50S ribosomal subunit.

One of two assembly initiator proteins, it binds directly to the 5'-end of the 23S rRNA, where it nucleates assembly of the 50S subunit. Functionally, one of the proteins that surrounds the polypeptide exit tunnel on the outside of the subunit. This is Large ribosomal subunit protein uL24 from Geobacillus stearothermophilus (Bacillus stearothermophilus).